The following is a 79-amino-acid chain: Acyl carrier protein (79 aa).

The Carrier domain occupies 2–77 (ESIEQRVKKI…QAIDYINSHG (76 aa)). Residue Ser-37 is modified to O-(pantetheine 4'-phosphoryl)serine.

The protein belongs to the acyl carrier protein (ACP) family. Post-translationally, 4'-phosphopantetheine is transferred from CoA to a specific serine of apo-ACP by AcpS. This modification is essential for activity because fatty acids are bound in thioester linkage to the sulfhydryl of the prosthetic group.

The protein localises to the cytoplasm. The protein operates within lipid metabolism; fatty acid biosynthesis. Functionally, carrier of the growing fatty acid chain in fatty acid biosynthesis. The chain is Acyl carrier protein from Bordetella avium (strain 197N).